Consider the following 281-residue polypeptide: Ribosomal RNA small subunit methyltransferase A (281 aa).

S-adenosyl-L-methionine contacts are provided by histidine 25, leucine 27, glycine 52, glutamate 74, aspartate 100, and asparagine 119.

This sequence belongs to the class I-like SAM-binding methyltransferase superfamily. rRNA adenine N(6)-methyltransferase family. RsmA subfamily.

It localises to the cytoplasm. It catalyses the reaction adenosine(1518)/adenosine(1519) in 16S rRNA + 4 S-adenosyl-L-methionine = N(6)-dimethyladenosine(1518)/N(6)-dimethyladenosine(1519) in 16S rRNA + 4 S-adenosyl-L-homocysteine + 4 H(+). Functionally, specifically dimethylates two adjacent adenosines (A1518 and A1519) in the loop of a conserved hairpin near the 3'-end of 16S rRNA in the 30S particle. May play a critical role in biogenesis of 30S subunits. This Paramagnetospirillum magneticum (strain ATCC 700264 / AMB-1) (Magnetospirillum magneticum) protein is Ribosomal RNA small subunit methyltransferase A.